Reading from the N-terminus, the 78-residue chain is TauPI-stichotoxin-Hcr2b (78 aa).

Positions 1–22 (MKGTFLICLILIAGFSFKSTQA) are cleaved as a signal peptide. The BPTI/Kunitz inhibitor domain maps to 26-76 (CLEPKVVGPCTAYFRRFYFDSETGKCTVFIYGGCEGNGNNFETLRACRAIC). 3 cysteine pairs are disulfide-bonded: Cys-26–Cys-76, Cys-35–Cys-59, and Cys-51–Cys-72.

Belongs to the venom Kunitz-type family. Sea anemone type 2 potassium channel toxin subfamily.

The protein resides in the secreted. It localises to the nematocyst. Its function is as follows. This protease inhibitor shows two different activities, it inhibits both the capsaicin receptor TRPV1 and serine proteases. It partially (max 50%) and reversibly inhibits capsaicin-induced response of TRPV1 (IC(50)=54 nM), a receptor of the pain pathway. The second activity is a weak inhibition of trypsin and chymotrypsin activity (Ki=1 uM and Ki=5 uM, respectively). In vivo, it shows antinociceptive and analgesic activities. It significantly prolongs tail-flick latency and reduces capsaicin-induced acute pain. In vivo, unlike other TRPV1 antagonists whose activity is associated with hyperthermia, this protein has the remarkable feature of dropping core body temperature. The polypeptide is TauPI-stichotoxin-Hcr2b (Radianthus crispa (Leathery sea anemone)).